Here is a 1485-residue protein sequence, read N- to C-terminus: Chromosome partition protein MukB (1485 aa).

An ATP-binding site is contributed by 34–41 (GGNGAGKS). Coiled-coil stretches lie at residues 311–480 (EMAR…EAYR) and 519–665 (GARL…RLSQ). A flexible hinge region spans residues 666–783 (PGGAEDARLI…SLPLFGRAAR (118 aa)). Coiled-coil stretches lie at residues 832 to 1115 (NDPE…QAKA) and 1209 to 1265 (IDAI…LQSV).

The protein belongs to the SMC family. MukB subfamily. As to quaternary structure, homodimerization via its hinge domain. Binds to DNA via its C-terminal region. Interacts, and probably forms a ternary complex, with MukE and MukF via its C-terminal region. The complex formation is stimulated by calcium or magnesium. Interacts with tubulin-related protein FtsZ.

The protein resides in the cytoplasm. Its subcellular location is the nucleoid. In terms of biological role, plays a central role in chromosome condensation, segregation and cell cycle progression. Functions as a homodimer, which is essential for chromosome partition. Involved in negative DNA supercoiling in vivo, and by this means organize and compact chromosomes. May achieve or facilitate chromosome segregation by condensation DNA from both sides of a centrally located replisome during cell division. This Edwardsiella ictaluri (strain 93-146) protein is Chromosome partition protein MukB.